We begin with the raw amino-acid sequence, 151 residues long: MASSTHPEMPELSGSYENKYLCLTICGYRKAGMTEEDYHNHMVHISAPMTKHLMVKYGIRRWTQIHNQAATRALMAELFDPQMANVADFDCFSQVVFQNVEDYKRMKQDPWYQEHLVGDHENFADTKRTLVTIGWIEEFVRDGEAVDGFKS.

Positions 31–126 (AGMTEEDYHN…VGDHENFADT (96 aa)) constitute an EthD domain.

It belongs to the tpcK family.

It catalyses the reaction atrochrysone carboxylate + H(+) = atrochrysone + CO2. Its pathway is secondary metabolite biosynthesis. Functionally, decarboxylase; part of the gene cluster that mediates the biosynthesis of the tetrahydroxanthone dimer neosartorin, which exhibits antibacterial activity. The two different monomeric units appear to be synthesized by the same set of enzymes, among which the Baeyer-Villiger monooxygenase nsrF is the key enzyme for the divergence of the biosynthetic routes. The pathway begins with the synthesis of atrochrysone thioester by the polyketide synthase nsrB. The atrochrysone carboxyl ACP thioesterase nsrC then breaks the thioester bond and releases the atrochrysone carboxylic acid from AacuL. Atrochrysone carboxylic acid is decarboxylated by the decarboxylase nsrE, and oxidized by the anthrone oxygenase nsrD to yield emodin. Emodin is then reduced to emodin hydroquinone by the oxidoreductase nsrR. A-ring reduction by the short chain dehydrogenase nsrJ, dehydration by the scytalone dehydratase-like protein nsrI and probable spontaneous re-oxidation, results in overall deoxygenation to chrysophanol. The Baeyer-Villiger monooxygenase nsrF accepts chrysophanol as a substrate to insert one oxygen atom at two different positions to yield the precursors of both monomric units. NsrF is promiscuous/flexible in interacting with the 2 (non methylated and methylated) aromatic rings of chrysophanol, thus diverging the biosynthetic pathway at this point. After the hydrolysis of the lactones, methylesterification by the methyltransferase nsrG yields respectively moniliphenone and 2,2',6'-trihydroxy-4-methyl-6-methoxya-cyldiphenylmethanone. The next steps are the hydroxylation by the FAD-dependent monooxygenase nsrK, followed by isomerization by the monooxygenase nsrQ. The short chain dehydrogenase/reductase nsrO then catalyzes the C-5 ketoreduction to give the xanthone skeleton of blennolide C and 5-acetylblennolide A. The acetyltransferase nsrL has a strict substrate specificity and uses only blennolide A but not blennolide C to yield 5-acetylblennolide A as the single-acetylated product. In the final step of the biosynthesis, the heterodimerization of the 2 xanthones, blennolide C and 5-acetylblennolide A, is catalyzed by the cytochrome P450 monooxygenase nsrP. NsrP can utilize at least three different xanthones as its substrates to perform the dimerization reaction. The chain is Decarboxylase nsrE from Aspergillus novofumigatus (strain IBT 16806).